The chain runs to 496 residues: RNA-binding motif protein, Y chromosome, family 1 member A1 (496 aa).

Positions 8-85 constitute an RRM domain; it reads GKLFIGGLNR…KAIKVEQAKK (78 aa). Disordered stretches follow at residues 78–349 and 452–496; these read IKVE…HRDY and KDQR…SSRY. Composition is skewed to low complexity over residues 97-114 and 149-159; these read PASS…SARG and PVKRGPSSRSG. Residues 175-184 show a composition bias toward polar residues; it reads NSWMGSQGPM. Basic and acidic residues-rich tracts occupy residues 204–214, 242–253, 276–289, 313–326, 335–349, and 484–496; these read RNDRMSTRHDG, DNGHSNRDEHSS, AYRD…DESY, GYRD…HESY, SSRE…HRDY, and GESR…SSRY.

As to quaternary structure, interacts with splicing factor proteins SFRS3/SRP20, TRA2B/SFRS10, KHDRBS1/SAM68 and KHDRBS3. Testis-specific.

It localises to the nucleus. RNA-binding protein involved in pre-mRNA splicing. Required for sperm development. Acts additively with TRA2B to promote exon 7 inclusion of the survival motor neuron SMN. Binds non-specifically to mRNAs. The protein is RNA-binding motif protein, Y chromosome, family 1 member A1 (RBMY1A1) of Homo sapiens (Human).